We begin with the raw amino-acid sequence, 190 residues long: Elongation factor P 2 (190 aa).

Belongs to the elongation factor P family.

It is found in the cytoplasm. It functions in the pathway protein biosynthesis; polypeptide chain elongation. Its function is as follows. Involved in peptide bond synthesis. Stimulates efficient translation and peptide-bond synthesis on native or reconstituted 70S ribosomes in vitro. Probably functions indirectly by altering the affinity of the ribosome for aminoacyl-tRNA, thus increasing their reactivity as acceptors for peptidyl transferase. The polypeptide is Elongation factor P 2 (efp2) (Chlamydia trachomatis serovar D (strain ATCC VR-885 / DSM 19411 / UW-3/Cx)).